The sequence spans 281 residues: MVSYKAFLITLAAVTRVLTYPANSSFELVDRSGTPSSTGTSGGYYYSFWTDGGADVTYTNGAGGEYKLQWSGNGNLVGGKGWNPGSAKAVTYSGTYSPNGNSYLSLYGWTTSPLIEYYVVENFGTYDPSTGATLKGTVVSDGATYKIYQTQRVNQPSIIGTATFYQYWSVRQTKRTGGTVTTGNHFNAWKALGMNMGTFDYMIVATEGYFSSGSSDITVGSSTGGGDSGSPTSAPTTSPTTSPGGTCGALYSQCGGTGFTGSQCCASGTCKYANSYYSQCL.

The first 19 residues, 1–19 (MVSYKAFLITLAAVTRVLT), serve as a signal peptide directing secretion. An N-linked (GlcNAc...) asparagine glycan is attached at Asn23. A GH11 domain is found at 32–220 (SGTPSSTGTS…SSGSSDITVG (189 aa)). Glu116 acts as the Nucleophile in catalysis. Glu207 functions as the Proton donor in the catalytic mechanism. The CBM1 domain maps to 246 to 281 (TCGALYSQCGGTGFTGSQCCASGTCKYANSYYSQCL).

Belongs to the glycosyl hydrolase 11 (cellulase G) family.

It carries out the reaction Endohydrolysis of (1-&gt;4)-beta-D-xylosidic linkages in xylans.. It participates in glycan degradation; xylan degradation. Functionally, endo-1,4-beta-xylanase involved in the hydrolysis of xylan, a major structural heterogeneous polysaccharide found in plant biomass representing the second most abundant polysaccharide in the biosphere, after cellulose. May act as an elicitor of plant defense responses in certain plants but does not exhibit any cell death when transiently expressed in N.benthamiana. In Botryotinia fuckeliana (strain B05.10) (Noble rot fungus), this protein is Ethylene-inducing xylanase 1.